We begin with the raw amino-acid sequence, 562 residues long: MIYDDKIFGDLCHKEFLVEREVKKLEEIYLEEVLPEDPKPEDEIEFTFNCPLKFHITSGKIVKDNREIYTFNIQERKTQWNDSIFNFSEIIKIKIPPLKENGLYQIHLYEMNEKIYEQYLSIDNFEAPLWSEESIIYHIFIDRFAKDEKEVEYSENLKEKLGGNLKGILSRLDYIENLGINTIWISPIFKSTSYHGYDIEDYFEIDPIWGTKEDLKKLVREAFNRGIRIILDFVPNHMSYKNPIFQKALKDKNSNLRSWFIFKGEDYETFFGVKSMPKINLKNKEAIDYIINAAKYWIREFGISGYRMDHATGPDINFWSIFYYNLKSEFPETFYFGEIVETPKETKKYVGKFDGTLDFYLFKIIRDFFIGKRWSTKEFVKMIDLEEKFYGNKFKRISFLENHDSNRFLWVAKDKKLLRLASIFQFSINAIPIIYNGQEMGCSQYRDILEGNRTLHEHARLPIPWSDDKQDKELIDFYRQLVKIRKSHPALYKGTFIPIFSDMISFIKETQEESILVLINIEDKEEIFNLNGTYRDLFSGNIYTNSLKLGPMSAHLLLRIDH.

Asn-236 is a binding site for Ca(2+). Asp-309 serves as the catalytic Nucleophile. Residue Glu-338 is the Proton donor of the active site.

Belongs to the glycosyl hydrolase 13 family. Monomer. Requires Ca(2+) as cofactor.

The protein localises to the cytoplasm. The enzyme catalyses Endohydrolysis of (1-&gt;4)-alpha-D-glucosidic linkages in polysaccharides containing three or more (1-&gt;4)-alpha-linked D-glucose units.. This Dictyoglomus thermophilum (strain ATCC 35947 / DSM 3960 / H-6-12) protein is Alpha-amylase 2 (amyB).